Reading from the N-terminus, the 483-residue chain is Glutathione reductase (483 aa).

The residue at position 1 (Met1) is an N-acetylmethionine. Leu2 carries the N-acetylserine modification. Residues Ser33 and Gly34 each coordinate FAD. Ser33 contacts glutathione. Residue Arg40 participates in glutathione binding. 4 residues coordinate FAD: Glu53, Thr60, Cys61, and Lys69. Cys61 and Cys66 are joined by a disulfide. Tyr123 is a binding site for glutathione. Ala139 lines the FAD pocket. 5 residues coordinate NADP(+): Ala205, Ile208, Glu211, Arg228, and Arg234. Thr243 serves as a coordination point for glutathione. N-linked (GlcNAc...) asparagine glycosylation is present at Asn278. Gly294 contributes to the NADP(+) binding site. An FAD-binding site is contributed by Asp334. Residue Glu340 participates in NADP(+) binding. Thr342 contacts FAD. Residue Arg350 participates in glutathione binding. Val375 provides a ligand contact to NADP(+). Lys425 is a binding site for glutathione. An FAD-binding site is contributed by His472. His472 functions as the Proton acceptor in the catalytic mechanism.

Belongs to the class-I pyridine nucleotide-disulfide oxidoreductase family. In terms of assembly, homodimer. It depends on FAD as a cofactor.

Its subcellular location is the cytoplasm. The protein resides in the nucleus. The protein localises to the mitochondrion. It localises to the peroxisome. It carries out the reaction 2 glutathione + NADP(+) = glutathione disulfide + NADPH + H(+). Functionally, catalyzes the reduction of glutathione disulfide (GSSG) to reduced glutathione (GSH). Constitutes the major mechanism to maintain a high GSH:GSSG ratio in the cytosol. In Saccharomyces cerevisiae (strain ATCC 204508 / S288c) (Baker's yeast), this protein is Glutathione reductase.